The primary structure comprises 321 residues: GDP-L-fucose synthase (321 aa).

Residue 14–20 (GGSGLVG) participates in NADP(+) binding. Tyr-143 acts as the Proton donor/acceptor in catalysis. NADP(+)-binding positions include Lys-147, 170 to 173 (PTNV), and His-186. Substrate contacts are provided by Lys-194, Trp-208, Arg-215, and Asp-277.

The protein belongs to the NAD(P)-dependent epimerase/dehydratase family. Fucose synthase subfamily. In terms of assembly, homodimer.

The enzyme catalyses GDP-beta-L-fucose + NADP(+) = GDP-4-dehydro-alpha-D-rhamnose + NADPH + H(+). It functions in the pathway nucleotide-sugar biosynthesis; GDP-L-fucose biosynthesis via de novo pathway; GDP-L-fucose from GDP-alpha-D-mannose: step 2/2. Its function is as follows. Catalyzes the two-step NADP-dependent conversion of GDP-4-dehydro-6-deoxy-D-mannose to GDP-fucose, involving an epimerase and a reductase reaction. The polypeptide is GDP-L-fucose synthase (GFUS) (Pongo abelii (Sumatran orangutan)).